Consider the following 440-residue polypeptide: Guanine/hypoxanthine permease PbuG (440 aa).

Helical transmembrane passes span 18–38, 57–77, 81–101, 107–127, 142–162, 175–195, 201–221, 251–271, 291–311, 327–347, 354–374, 388–408, and 419–439; these read IIGGLTTFLSMAYILFVNPIT, AVFTATALASAAGCILMGLIA, IAIAPGMGLNAFFAFSVVLGM, AALSGVFISGLIFVALSLTGF, AVGAGIGLFITFVGLQGSGII, IHSGPVLLTIFGVIVTVILMV, GVFIGMLLTAVAGMIFGLVPV, MLIVILTFLFVGFFDTAGTLV, ALLADSSSIVIGAVLGTSTTT, GFAAIVTGILFLLATFFSPLL, VTAPALIIVGALMVAPLGKIA, MIMMPLTYSIATGIAIGFIFY, and KEVHPIMYGLFVVFILYFIFL.

It belongs to the nucleobase:cation symporter-2 (NCS2) (TC 2.A.40) family. Azg-like subfamily.

The protein resides in the cell membrane. Functionally, involved in the uptake of the purine bases hypoxanthine and guanine. This chain is Guanine/hypoxanthine permease PbuG (pbuG), found in Bacillus subtilis (strain 168).